The following is a 65-amino-acid chain: Alpha-toxin Bot11 (65 aa).

The LCN-type CS-alpha/beta domain occupies 2–64; the sequence is KDGYIVDDRN…VRTVQAGRCR (63 aa). 4 disulfide bridges follow: cysteine 12/cysteine 63, cysteine 16/cysteine 36, cysteine 22/cysteine 46, and cysteine 26/cysteine 48.

Belongs to the long (4 C-C) scorpion toxin superfamily. Sodium channel inhibitor family. Alpha subfamily. As to expression, expressed by the venom gland.

The protein localises to the secreted. Alpha toxins bind voltage-independently at site-3 of sodium channels (Nav) and inhibit the inactivation of the activated channels, thereby blocking neuronal transmission. This chain is Alpha-toxin Bot11, found in Buthus occitanus tunetanus (Common European scorpion).